Here is a 344-residue protein sequence, read N- to C-terminus: MRILGIETSCDETGVAIYDEDKGLIANQLYTQIALHADYGGVVPELASRDHIRKTAPLIEAALQEANLTAKDIDGIAYTCGPGLVGALLVGSTIARSLAYAWNVPAVGVHHMEGHLLAPMLEDADNRPQFPFIALLVSGGHTQLVKVEGVGKYEVMGESIDDAAGEAFDKTAKLLGLDYPGGAALSRLAEKGSAGRFVFPKPMTDRPGLDFSFSGLKTFAANTINQAIKNEGELSEQTKADIAHAFQTAVVETLAIKCKRALKETGYKRLVIAGGVSANKQLRQGLANLMDDLKGRVFYPAPQFCTDNGAMISYVGYLRLKHGERTDLAIEVKPRWPMIELEAI.

Positions 111 and 115 each coordinate Fe cation. Substrate is bound by residues 136-140 (LVSGG), Asp169, Gly182, and Asn279. Asp307 serves as a coordination point for Fe cation.

Belongs to the KAE1 / TsaD family. Fe(2+) is required as a cofactor.

The protein resides in the cytoplasm. The enzyme catalyses L-threonylcarbamoyladenylate + adenosine(37) in tRNA = N(6)-L-threonylcarbamoyladenosine(37) in tRNA + AMP + H(+). Its function is as follows. Required for the formation of a threonylcarbamoyl group on adenosine at position 37 (t(6)A37) in tRNAs that read codons beginning with adenine. Is involved in the transfer of the threonylcarbamoyl moiety of threonylcarbamoyl-AMP (TC-AMP) to the N6 group of A37, together with TsaE and TsaB. TsaD likely plays a direct catalytic role in this reaction. This chain is tRNA N6-adenosine threonylcarbamoyltransferase, found in Mannheimia succiniciproducens (strain KCTC 0769BP / MBEL55E).